We begin with the raw amino-acid sequence, 515 residues long: 1-pyrroline-5-carboxylate dehydrogenase (515 aa).

Residues Glu-286 and Cys-320 contribute to the active site.

The protein belongs to the aldehyde dehydrogenase family. RocA subfamily.

The enzyme catalyses L-glutamate 5-semialdehyde + NAD(+) + H2O = L-glutamate + NADH + 2 H(+). The protein operates within amino-acid degradation; L-proline degradation into L-glutamate; L-glutamate from L-proline: step 2/2. The polypeptide is 1-pyrroline-5-carboxylate dehydrogenase (Bacillus anthracis (strain A0248)).